We begin with the raw amino-acid sequence, 228 residues long: Ribosomal RNA small subunit methyltransferase G (228 aa).

Residues Gly89, Leu94, 140–141, and Arg159 each bind S-adenosyl-L-methionine; that span reads VE.

It belongs to the methyltransferase superfamily. RNA methyltransferase RsmG family.

The protein resides in the cytoplasm. It catalyses the reaction guanosine(527) in 16S rRNA + S-adenosyl-L-methionine = N(7)-methylguanosine(527) in 16S rRNA + S-adenosyl-L-homocysteine. Functionally, specifically methylates the N7 position of guanine in position 527 of 16S rRNA. In Burkholderia multivorans (strain ATCC 17616 / 249), this protein is Ribosomal RNA small subunit methyltransferase G.